A 325-amino-acid polypeptide reads, in one-letter code: NADH-quinone oxidoreductase subunit H (325 aa).

8 helical membrane-spanning segments follow: residues 11-31, 81-101, 114-134, 154-174, 186-206, 237-257, 265-285, and 304-324; these read ILLT…CGAF, VIFT…FAIV, IGIL…LFAG, LSYE…AGSF, VWNV…GVAV, FFVG…TLFF, LPPF…FILI, and ICLP…LWQA.

This sequence belongs to the complex I subunit 1 family. As to quaternary structure, NDH-1 is composed of 13 different subunits. Subunits NuoA, H, J, K, L, M, N constitute the membrane sector of the complex.

The protein resides in the cell inner membrane. It catalyses the reaction a quinone + NADH + 5 H(+)(in) = a quinol + NAD(+) + 4 H(+)(out). NDH-1 shuttles electrons from NADH, via FMN and iron-sulfur (Fe-S) centers, to quinones in the respiratory chain. The immediate electron acceptor for the enzyme in this species is believed to be ubiquinone. Couples the redox reaction to proton translocation (for every two electrons transferred, four hydrogen ions are translocated across the cytoplasmic membrane), and thus conserves the redox energy in a proton gradient. This subunit may bind ubiquinone. This is NADH-quinone oxidoreductase subunit H from Escherichia coli O7:K1 (strain IAI39 / ExPEC).